The primary structure comprises 582 residues: Dihydroxy-acid dehydratase 3 (582 aa).

C67 is a binding site for [2Fe-2S] cluster. D99 is a Mg(2+) binding site. C140 is a binding site for [2Fe-2S] cluster. D141 and K142 together coordinate Mg(2+). The residue at position 142 (K142) is an N6-carboxylysine. C212 is a binding site for [2Fe-2S] cluster. Residue E462 coordinates Mg(2+). The Proton acceptor role is filled by S488.

This sequence belongs to the IlvD/Edd family. In terms of assembly, homodimer. [2Fe-2S] cluster is required as a cofactor. It depends on Mg(2+) as a cofactor.

The enzyme catalyses (2R)-2,3-dihydroxy-3-methylbutanoate = 3-methyl-2-oxobutanoate + H2O. The catalysed reaction is (2R,3R)-2,3-dihydroxy-3-methylpentanoate = (S)-3-methyl-2-oxopentanoate + H2O. Its pathway is amino-acid biosynthesis; L-isoleucine biosynthesis; L-isoleucine from 2-oxobutanoate: step 3/4. The protein operates within amino-acid biosynthesis; L-valine biosynthesis; L-valine from pyruvate: step 3/4. In terms of biological role, functions in the biosynthesis of branched-chain amino acids. Catalyzes the dehydration of (2R,3R)-2,3-dihydroxy-3-methylpentanoate (2,3-dihydroxy-3-methylvalerate) into 2-oxo-3-methylpentanoate (2-oxo-3-methylvalerate) and of (2R)-2,3-dihydroxy-3-methylbutanoate (2,3-dihydroxyisovalerate) into 2-oxo-3-methylbutanoate (2-oxoisovalerate), the penultimate precursor to L-isoleucine and L-valine, respectively. The protein is Dihydroxy-acid dehydratase 3 of Bradyrhizobium diazoefficiens (strain JCM 10833 / BCRC 13528 / IAM 13628 / NBRC 14792 / USDA 110).